The primary structure comprises 328 residues: DNA-directed RNA polymerase subunit alpha (328 aa).

The alpha N-terminal domain (alpha-NTD) stretch occupies residues 1 to 231; the sequence is MQTNLLKPKA…EQLAVFAQLE (231 aa). Positions 248 to 328 are alpha C-terminal domain (alpha-CTD); it reads FDPILLRPVD…NWPPQGLDKR (81 aa).

Belongs to the RNA polymerase alpha chain family. In terms of assembly, homodimer. The RNAP catalytic core consists of 2 alpha, 1 beta, 1 beta' and 1 omega subunit. When a sigma factor is associated with the core the holoenzyme is formed, which can initiate transcription.

It catalyses the reaction RNA(n) + a ribonucleoside 5'-triphosphate = RNA(n+1) + diphosphate. DNA-dependent RNA polymerase catalyzes the transcription of DNA into RNA using the four ribonucleoside triphosphates as substrates. This chain is DNA-directed RNA polymerase subunit alpha, found in Leptothrix cholodnii (strain ATCC 51168 / LMG 8142 / SP-6) (Leptothrix discophora (strain SP-6)).